Reading from the N-terminus, the 567-residue chain is MIMYIIWALLFIPVSAQQWTLFDEQAKPKREGRVRLVGGLPSSGRVEVYHDGQWGTVCDDGWDLAEAQVVCRQLGFPGAVSVASGGQYGEGSGPIWLDDMNCKGSESILSECCFKGWGVNDCTHQEDAGVVCDTGTNATNIRQISVDNSLGLSDDLGLLFDSEDGCDFIIAVQDLGEEAELTLCVHRVILMMYPELNITNDTRNLTVDVSQTCQSHVSALIRYLYTRQIDVSATSAQCLYQLAFIFGVQRLMEDVGRVFTALIPEDNTFQTPVSMYEYGLRTGDLVLQENVLQYLSWNCEFLISSPVWSTVSFEMMDALLQRSDLIVKDEAVLLEALERWIQDKGDQISSDKQASLLSHIRFLLIPVDKLYDIQFSSSALYQNNEKLYLTGLLRGFEFNALPFSKIRNQIDNASSEYLPRIYTGDEWSVFINDTTVSSPYYNYNYYGQSNRIQTFFTSAHPSALYKDQKVQWQAQVFLTLQECSNYGVSCNTLPVARFYGYSNQYSYSNIISYNNRLILTCKNQNNVFHVQEFKNDVAVIPTNSSMGLPNPCPDDYSFRFVVRPQYI.

The signal sequence occupies residues 1–16; the sequence is MIMYIIWALLFIPVSA. The 100-residue stretch at 34–133 folds into the SRCR domain; that stretch reads VRLVGGLPSS…HQEDAGVVCD (100 aa). 3 disulfides stabilise this stretch: Cys58-Cys122, Cys71-Cys132, and Cys102-Cys112. Asn137, Asn197, Asn200, and Asn204 each carry an N-linked (GlcNAc...) asparagine glycan. Residues 272-374 form the BACK domain; sequence PVSMYEYGLR…IPVDKLYDIQ (103 aa). 3 N-linked (GlcNAc...) asparagine glycosylation sites follow: Asn412, Asn432, and Asn543.

The protein resides in the secreted. It is found in the extracellular space. The protein localises to the extracellular matrix. Its function is as follows. Promotes integrin-mediated cell adhesion. The sequence is that of Galectin-3-binding protein A (lgals3bpa) from Danio rerio (Zebrafish).